We begin with the raw amino-acid sequence, 2867 residues long: Reticulocyte-binding protein 2 (2867 aa).

The signal sequence occupies residues 1 to 21 (MEKNVLWVIFYNFLVILLASC). Residues 22–2805 (NDSNRSKSNS…TAKEAIGKTR (2784 aa)) are Extracellular-facing. Disordered regions lie at residues 52 to 73 (KYNN…NNHN), 2650 to 2682 (ETKT…ASVP), and 2712 to 2799 (DNTH…TAKE). Residues 61–73 (NIGNQINNDNNHN) are compositionally biased toward low complexity. A compositionally biased stretch (basic and acidic residues) spans 2659 to 2674 (KAKEEKVPPKETENRA). A compositionally biased stretch (polar residues) spans 2725–2736 (DSISAPQEQVEY). A compositionally biased stretch (acidic residues) spans 2743-2754 (ENDETTEEESEH). Residues 2755–2799 (DDAHDDTHDDTHDDTHDDTHDDTHDDTHDDTHDESQTGRDSTAKE) show a composition bias toward basic and acidic residues. A run of 7 repeats spans residues 2758–2761 (HDDT), 2762–2765 (HDDT), 2766–2769 (HDDT), 2770–2773 (HDDT), 2774–2777 (HDDT), 2778–2781 (HDDT), and 2782–2785 (HDDT). Residues 2758 to 2785 (HDDTHDDTHDDTHDDTHDDTHDDTHDDT) form a 7 X 4 AA tandem repeats of H-D-D-T region. Residues 2806–2826 (LAGAVIIAMSVLSGFIIIVFK) traverse the membrane as a helical segment. Topologically, residues 2827–2867 (DKDEEEKDHNEHGYNEAFGEHDEYNMHDKEEVIEVCFNEED) are cytoplasmic.

Its subcellular location is the cell membrane. Involved in reticulocyte adhesion. Specifically binds to human reticulocyte cells. This chain is Reticulocyte-binding protein 2 (RBP-2), found in Plasmodium vivax (strain Belem).